An 89-amino-acid polypeptide reads, in one-letter code: Small ribosomal subunit protein uS15 (89 aa).

This sequence belongs to the universal ribosomal protein uS15 family. Part of the 30S ribosomal subunit. Forms a bridge to the 50S subunit in the 70S ribosome, contacting the 23S rRNA.

Functionally, one of the primary rRNA binding proteins, it binds directly to 16S rRNA where it helps nucleate assembly of the platform of the 30S subunit by binding and bridging several RNA helices of the 16S rRNA. Forms an intersubunit bridge (bridge B4) with the 23S rRNA of the 50S subunit in the ribosome. The polypeptide is Small ribosomal subunit protein uS15 (Geobacillus sp. (strain WCH70)).